Consider the following 316-residue polypeptide: Porphobilinogen deaminase (316 aa).

C245 is modified (S-(dipyrrolylmethanemethyl)cysteine).

It belongs to the HMBS family. As to quaternary structure, monomer. Dipyrromethane is required as a cofactor.

It catalyses the reaction 4 porphobilinogen + H2O = hydroxymethylbilane + 4 NH4(+). It functions in the pathway porphyrin-containing compound metabolism; protoporphyrin-IX biosynthesis; coproporphyrinogen-III from 5-aminolevulinate: step 2/4. It participates in porphyrin-containing compound metabolism; chlorophyll biosynthesis. Its function is as follows. Tetrapolymerization of the monopyrrole PBG into the hydroxymethylbilane pre-uroporphyrinogen in several discrete steps. The polypeptide is Porphobilinogen deaminase (Prochlorococcus marinus (strain AS9601)).